Reading from the N-terminus, the 39-residue chain is Potassium channel toxin alpha-KTx 2.24 (39 aa).

Cystine bridges form between Cys-7–Cys-29, Cys-13–Cys-34, and Cys-17–Cys-36.

It belongs to the short scorpion toxin superfamily. Potassium channel inhibitor family. Alpha-KTx 02 subfamily. In terms of tissue distribution, expressed by the venom gland.

The protein localises to the secreted. Its function is as follows. Blocks human voltage-gated potassium (Kv) channels Kv1.1/KCNA, Kv1.2/KCNA2 and Kv1.3/KCNA3. Exhibits high affinity for Kv1.2/KCNA2 and selectivity over Kv1.1/KCNA and Kv1.3/KCNA3. In Centruroides bonito (Scorpion), this protein is Potassium channel toxin alpha-KTx 2.24.